We begin with the raw amino-acid sequence, 65 residues long: Ovary maturating parsin (65 aa).

Over residues 17 to 28 the composition is skewed to low complexity; it reads PAAPAVAPAAPA. Positions 17 to 36 are disordered; that stretch reads PAAPAVAPAAPASWPHQQRR.

In terms of assembly, monomer.

Its function is as follows. Neurohormone that anticipates ovarian maturation. Acts as a true gonadotropin and stimulates vitellogenin biosynthesis. This chain is Ovary maturating parsin, found in Locusta migratoria (Migratory locust).